Here is a 285-residue protein sequence, read N- to C-terminus: MASTGQTNNYKQGYSSQTVETQQTRRAESEAAFLLPYIKKTDYILDVGCGPGTITVGFVKYASEGRTIGIDISANVLGRAKAAADEASIPKEGPGSIIFEEGNILEGLAYPDNTFDIVFCAHTLGYMPPPDMPLKALTEMRRVLKPGGILATRDTIEQHFYPRSMDLDRLWVGHFRRAVLKGDPEAEDLSPPFMPALFRRAGFDADGGKVHISTGSTVFSGATTRQWLANRAESQLQPGDPLRRSWLEAGITEDEIHETLLASKKWAETEDAWYAALHCDMLAWK.

Residues methionine 1–glutamine 22 are disordered.

The protein belongs to the class I-like SAM-binding methyltransferase superfamily. As to quaternary structure, monomer.

In terms of biological role, probable methyltransferase; part of the gene cluster that mediates the biosynthesis of luteodienoside A, a glycosylated polyketide consisting of an unusual 1-O-beta-D-glucopyranosyl-myo-inositol (glucinol) ester of 3-hydroxy-2,2,4-trimethylocta-4,6-dienoic acid. The HR-PKS ltbA produces the trimethylated polyketide chain from acetyl-CoA, malonyl-CoA and S-adenosylmethionine (SAM), and the ltbA cAT domain then uses glucinol produced by the glycosyltransferase ltbB as an offloading substrate to release luteodienoside A. Since ltbA and ltbB are sufficient for the biosynthesis of luteodienoside A, the functions of the methyltransferase ltbC and the FAD-binding monooxygenase ltbD within the pathway remain obscur. This is Probable methyltransferase ltbC from Aspergillus luteorubrus.